Here is a 302-residue protein sequence, read N- to C-terminus: Stanniocalcin-2 (302 aa).

A signal peptide spans 1-24; the sequence is MCAERLGQFMTLALVLATFDPARG. The disordered stretch occupies residues 23-44; that stretch reads RGTDATNPPEGPQDRSSQQKGR. N-linked (GlcNAc...) asparagine glycosylation occurs at N73. Residues 217–302 are disordered; that stretch reads KPPTAPPERQ…EQSEYSDIRR (86 aa). The segment covering 227–264 has biased composition (basic and acidic residues); the sequence is PQVDRTKLSRAHHGEAGHHLPEPSSRETGRGAKGERGS. S250 and S251 each carry phosphoserine; by FAM20C. At T254 the chain carries Phosphothreonine; by FAM20C.

Belongs to the stanniocalcin family. Homodimer; disulfide-linked. Expressed in a variety of tissues including muscle, heart, pancreas, kidney, spleen, prostate, small intestine, colon and peripheral blood leukocytes.

It localises to the secreted. In terms of biological role, has an anti-hypocalcemic action on calcium and phosphate homeostasis. The sequence is that of Stanniocalcin-2 (STC2) from Homo sapiens (Human).